We begin with the raw amino-acid sequence, 262 residues long: Ribosomal RNA small subunit methyltransferase A (262 aa).

6 residues coordinate S-adenosyl-L-methionine: N20, L22, G47, E68, D90, and N110.

The protein belongs to the class I-like SAM-binding methyltransferase superfamily. rRNA adenine N(6)-methyltransferase family. RsmA subfamily.

The protein localises to the cytoplasm. It catalyses the reaction adenosine(1518)/adenosine(1519) in 16S rRNA + 4 S-adenosyl-L-methionine = N(6)-dimethyladenosine(1518)/N(6)-dimethyladenosine(1519) in 16S rRNA + 4 S-adenosyl-L-homocysteine + 4 H(+). Specifically dimethylates two adjacent adenosines (A1518 and A1519) in the loop of a conserved hairpin near the 3'-end of 16S rRNA in the 30S particle. May play a critical role in biogenesis of 30S subunits. This Chlorobium phaeobacteroides (strain BS1) protein is Ribosomal RNA small subunit methyltransferase A.